We begin with the raw amino-acid sequence, 278 residues long: DNA adenine methylase (278 aa).

S-adenosyl-L-methionine-binding residues include Trp-10, Lys-14, Asp-54, and Asp-181.

It belongs to the N(4)/N(6)-methyltransferase family.

It carries out the reaction a 2'-deoxyadenosine in DNA + S-adenosyl-L-methionine = an N(6)-methyl-2'-deoxyadenosine in DNA + S-adenosyl-L-homocysteine + H(+). In terms of biological role, an alpha subtype methylase, recognizes the double-stranded sequence 5'-GATC-3' and methylates A-2. May be involved in methyl-directed DNA mismatch repair, initiation of chromosome replication and gene expression. The protein is DNA adenine methylase (dam) of Escherichia coli O157:H7.